Consider the following 221-residue polypeptide: UPF0758 protein CGSHiEE_07200 (221 aa).

An MPN domain is found at 99 to 221 (IINDPETVKL…CYSFAENCLL (123 aa)). 3 residues coordinate Zn(2+): His170, His172, and Asp183. Residues 170 to 183 (HNHPSGVTEPSYSD) carry the JAMM motif motif.

The protein belongs to the UPF0758 family.

This Haemophilus influenzae (strain PittEE) protein is UPF0758 protein CGSHiEE_07200.